A 968-amino-acid polypeptide reads, in one-letter code: uncharacterized protein (968 aa).

Residues 12 to 32 (LIFIFSLFFLILFFLESSIGF) form a helical membrane-spanning segment.

To E.coli YtfN.

The protein resides in the membrane. This is an uncharacterized protein from Buchnera aphidicola subsp. Schizaphis graminum (strain Sg).